We begin with the raw amino-acid sequence, 362 residues long: MIIDRVQVEAINSFSNLELLKEVYGLIWILPILTLLLGITIEVLVIVWLEREISASIQQRIGPEYAGPLGLLQAIADGTKLLFKEDILPSRGDIPLFSIGPSIAVISILLSFLVIPLGYRFVLADLSIGVFLWIAISSIAPIGLLMAGYSSNNKYSFLGGLRAAAQSISYEIPLTFCVLAISLLSNSLSTVDIVEAQSKYGFFGWNLWRQPIGFLVFLISSLAECERLPFDLPEAEEELVAGYQTEYSGIKYGLFYLVSYLNLLVSSLFVTVLYLGGWNLSIPYISFFGFFQMNKMVGILEMTMSIFITLTKAYLFLFISITIRWTLPRMRMDQLLNLGWKFLLPISLGNLLLTTSFQLVSL.

8 helical membrane-spanning segments follow: residues 27–47, 94–114, 128–148, 164–184, 202–222, 247–267, 303–323, and 335–355; these read IWILPILTLLLGITIEVLVIV, IPLFSIGPSIAVISILLSFLV, IGVFLWIAISSIAPIGLLMAG, AAQSISYEIPLTFCVLAISLL, FFGWNLWRQPIGFLVFLISSL, YSGIKYGLFYLVSYLNLLVSS, TMSIFITLTKAYLFLFISITI, and LLNLGWKFLLPISLGNLLLTT.

This sequence belongs to the complex I subunit 1 family. As to quaternary structure, NDH is composed of at least 16 different subunits, 5 of which are encoded in the nucleus.

It is found in the plastid. Its subcellular location is the chloroplast thylakoid membrane. It carries out the reaction a plastoquinone + NADH + (n+1) H(+)(in) = a plastoquinol + NAD(+) + n H(+)(out). It catalyses the reaction a plastoquinone + NADPH + (n+1) H(+)(in) = a plastoquinol + NADP(+) + n H(+)(out). Its function is as follows. NDH shuttles electrons from NAD(P)H:plastoquinone, via FMN and iron-sulfur (Fe-S) centers, to quinones in the photosynthetic chain and possibly in a chloroplast respiratory chain. The immediate electron acceptor for the enzyme in this species is believed to be plastoquinone. Couples the redox reaction to proton translocation, and thus conserves the redox energy in a proton gradient. This chain is NAD(P)H-quinone oxidoreductase subunit 1, chloroplastic (ndhA), found in Oryza sativa (Rice).